A 39-amino-acid chain; its full sequence is Photosystem II reaction center protein L (39 aa).

A helical transmembrane segment spans residues 18-38 (SLYLGLLSVLVLGILFSSYFF).

It belongs to the PsbL family. PSII is composed of 1 copy each of membrane proteins PsbA, PsbB, PsbC, PsbD, PsbE, PsbF, PsbH, PsbI, PsbJ, PsbK, PsbL, PsbM, PsbT, PsbX, PsbY, Psb30/Ycf12, peripheral proteins PsbO, CyanoQ (PsbQ), PsbU, PsbV and a large number of cofactors. It forms dimeric complexes.

The protein localises to the cellular thylakoid membrane. One of the components of the core complex of photosystem II (PSII). PSII is a light-driven water:plastoquinone oxidoreductase that uses light energy to abstract electrons from H(2)O, generating O(2) and a proton gradient subsequently used for ATP formation. It consists of a core antenna complex that captures photons, and an electron transfer chain that converts photonic excitation into a charge separation. This subunit is found at the monomer-monomer interface and is required for correct PSII assembly and/or dimerization. The polypeptide is Photosystem II reaction center protein L (Prochlorococcus marinus subsp. pastoris (strain CCMP1986 / NIES-2087 / MED4)).